Reading from the N-terminus, the 344-residue chain is Arginine N-succinyltransferase (344 aa).

Position 125 (L125) interacts with succinyl-CoA. Residue H229 is the Proton donor of the active site.

It belongs to the arginine N-succinyltransferase family.

It carries out the reaction succinyl-CoA + L-arginine = N(2)-succinyl-L-arginine + CoA + H(+). Its pathway is amino-acid degradation; L-arginine degradation via AST pathway; L-glutamate and succinate from L-arginine: step 1/5. Catalyzes the transfer of succinyl-CoA to arginine to produce N(2)-succinylarginine. The chain is Arginine N-succinyltransferase from Escherichia coli O127:H6 (strain E2348/69 / EPEC).